A 216-amino-acid polypeptide reads, in one-letter code: MSKQLILALSKGRILQETLPLLADAGIEPAEDFGKSRKLLFDTNLPDVKLVVIRAVDVPTYVQMGAADVGVAGKDTLLEHGAEGLYEPLDLEISRCKLMTAGIVGAEPTHARRRVATKFVNVARRYYAQQGIQAEVIKLYGAMELAPLMNLADEIVDIVDTGNTLRANGMEPRELIDEVSSRLVVNKASMTMKHDRLKPLIERLGQAVASRRETQA.

This sequence belongs to the ATP phosphoribosyltransferase family. Short subfamily. As to quaternary structure, heteromultimer composed of HisG and HisZ subunits.

The protein resides in the cytoplasm. The catalysed reaction is 1-(5-phospho-beta-D-ribosyl)-ATP + diphosphate = 5-phospho-alpha-D-ribose 1-diphosphate + ATP. Its pathway is amino-acid biosynthesis; L-histidine biosynthesis; L-histidine from 5-phospho-alpha-D-ribose 1-diphosphate: step 1/9. Its function is as follows. Catalyzes the condensation of ATP and 5-phosphoribose 1-diphosphate to form N'-(5'-phosphoribosyl)-ATP (PR-ATP). Has a crucial role in the pathway because the rate of histidine biosynthesis seems to be controlled primarily by regulation of HisG enzymatic activity. In Chromohalobacter salexigens (strain ATCC BAA-138 / DSM 3043 / CIP 106854 / NCIMB 13768 / 1H11), this protein is ATP phosphoribosyltransferase.